A 215-amino-acid chain; its full sequence is Deoxyribose-phosphate aldolase (215 aa).

D90 functions as the Proton donor/acceptor in the catalytic mechanism. Residue K152 is the Schiff-base intermediate with acetaldehyde of the active site. K181 functions as the Proton donor/acceptor in the catalytic mechanism.

The protein belongs to the DeoC/FbaB aldolase family. DeoC type 1 subfamily.

The protein resides in the cytoplasm. The catalysed reaction is 2-deoxy-D-ribose 5-phosphate = D-glyceraldehyde 3-phosphate + acetaldehyde. It functions in the pathway carbohydrate degradation; 2-deoxy-D-ribose 1-phosphate degradation; D-glyceraldehyde 3-phosphate and acetaldehyde from 2-deoxy-alpha-D-ribose 1-phosphate: step 2/2. Catalyzes a reversible aldol reaction between acetaldehyde and D-glyceraldehyde 3-phosphate to generate 2-deoxy-D-ribose 5-phosphate. This is Deoxyribose-phosphate aldolase from Ureaplasma urealyticum serovar 10 (strain ATCC 33699 / Western).